The sequence spans 602 residues: Glutamine--fructose-6-phosphate aminotransferase [isomerizing] (602 aa).

Cysteine 2 acts as the Nucleophile; for GATase activity in catalysis. Residues 2-222 (CGIFGIIFAE…DGEYGYITAG (221 aa)) enclose the Glutamine amidotransferase type-2 domain. SIS domains follow at residues 284 to 422 (VANA…ALGH) and 452 to 592 (LAKR…PDKP). The active-site For Fru-6P isomerization activity is the lysine 597.

In terms of assembly, homodimer.

Its subcellular location is the cytoplasm. The catalysed reaction is D-fructose 6-phosphate + L-glutamine = D-glucosamine 6-phosphate + L-glutamate. Functionally, catalyzes the first step in hexosamine metabolism, converting fructose-6P into glucosamine-6P using glutamine as a nitrogen source. This is Glutamine--fructose-6-phosphate aminotransferase [isomerizing] from Pyrobaculum aerophilum (strain ATCC 51768 / DSM 7523 / JCM 9630 / CIP 104966 / NBRC 100827 / IM2).